A 428-amino-acid polypeptide reads, in one-letter code: Dihydroorotase (428 aa).

Residues H59 and H61 each coordinate Zn(2+). Residues 61-63 (HLR) and N93 each bind substrate. Zn(2+)-binding residues include D151, H178, and H231. N277 contacts substrate. D304 contacts Zn(2+). D304 is an active-site residue. Substrate contacts are provided by residues H308 and 322–323 (FG).

The protein belongs to the metallo-dependent hydrolases superfamily. DHOase family. Class I DHOase subfamily. Zn(2+) is required as a cofactor.

It carries out the reaction (S)-dihydroorotate + H2O = N-carbamoyl-L-aspartate + H(+). It functions in the pathway pyrimidine metabolism; UMP biosynthesis via de novo pathway; (S)-dihydroorotate from bicarbonate: step 3/3. In terms of biological role, catalyzes the reversible cyclization of carbamoyl aspartate to dihydroorotate. This chain is Dihydroorotase, found in Halalkalibacterium halodurans (strain ATCC BAA-125 / DSM 18197 / FERM 7344 / JCM 9153 / C-125) (Bacillus halodurans).